The chain runs to 429 residues: Citrate synthase, chromosomal (429 aa).

Active-site residues include histidine 306 and aspartate 364.

Belongs to the citrate synthase family.

It carries out the reaction oxaloacetate + acetyl-CoA + H2O = citrate + CoA + H(+). It functions in the pathway carbohydrate metabolism; tricarboxylic acid cycle; isocitrate from oxaloacetate: step 1/2. This chain is Citrate synthase, chromosomal (ccsA), found in Rhizobium tropici.